Here is a 161-residue protein sequence, read N- to C-terminus: MSVTLHTDVGDIKIEVFCERTPKTCENFLALCASNYYNGCIFHRNIKGFMVQTGDPTGTGRGGNSIWGKKFEDEYSEYLKHNVRGVVSMANNGPNTNGSQFFITYGKQPHLDMKYTVFGKVIDGLETLDELEKLPVNEKTYRPLNDVHIKDITIHANPFAQ.

Serine 2 is modified (N-acetylserine). Residues 2-154 enclose the PPIase cyclophilin-type domain; it reads SVTLHTDVGD…NDVHIKDITI (153 aa). Arginine 61 bears the Omega-N-methylarginine mark.

Belongs to the cyclophilin-type PPIase family. PPIL3 subfamily. Identified in the spliceosome C complex. In terms of tissue distribution, ubiquitous. Detected at low levels.

It catalyses the reaction [protein]-peptidylproline (omega=180) = [protein]-peptidylproline (omega=0). In terms of biological role, PPIases accelerate the folding of proteins. It catalyzes the cis-trans isomerization of proline imidic peptide bonds in oligopeptides. May be involved in pre-mRNA splicing. The protein is Peptidyl-prolyl cis-trans isomerase-like 3 (PPIL3) of Homo sapiens (Human).